The sequence spans 478 residues: MNFLGFGQSADIEIVFDGAEHKTAEVKGEDGKVEKMLLFYDGETVSGKVNVTLKKPGSKLEHQGIKIEFIGQIELYYDRGNHHEFKCLAKALARPGDLIQNNSYPFDFPKVEKQFEVYAGSNVRLRYFLRATIVRRISDITKEVDIAVHTLCSYPEMNNPIKMEVGIEDCLHIEFEYNKSKYHLRDTIIGKIYFLLVRIKIKHMEIAIIKKESTGTGPTMFNENETIAKYEIMDGAPVKGESIPIRVFLAGYNLTPTMRDINKKFSVKYFLNLVLMDTEDRRYFKQQEITLWRKADKPRYHGAQQHQQQQHQHVPLHAPPHLVSGPAAPTVAHSLISSSTDSGEVGGAPTAPGTAGSESKMGLFTRESPNQEFSQQQMDSPPLTPTPSTASVAVAVPTAASSVSEPAPERGIGDGAAAATTSASPVAMLSSSPPPLLPVSPLSRSETEASEQVQPEDEDLDAITPNTKKTGATPLATD.

A disordered region spans residues 298-478 (PRYHGAQQHQ…KTGATPLATD (181 aa)). Composition is skewed to low complexity over residues 303-323 (AQQH…PHLV) and 347-356 (GAPTAPGTAG). The segment covering 367–379 (ESPNQEFSQQQMD) has biased composition (polar residues). Low complexity-rich tracts occupy residues 386–406 (TPST…VSEP) and 416–431 (AAAA…MLSS).

It belongs to the VPS26 family. Component of the retromer complex, composed of Vps26 and Vps35.

The protein resides in the cytoplasm. It localises to the membrane. Component of the retromer complex which acts in conjunction with wingless (wg) and clathrin-mediated endocytosis to sustain a wntless (wls) traffic loop. This loop encompasses the Golgi, the cell surface, an endocytic compartment and a retrograde route leading back to the Golgi, thereby enabling wls to direct wg secretion. The hh and dpp signaling pathways do not require the retromer complex suggesting that it does not play a general role in exocytosis. This is Vacuolar protein sorting-associated protein 26 (Vps26) from Drosophila melanogaster (Fruit fly).